The sequence spans 286 residues: MNKSGIIILNKPKGLTTNHLIQKLKRKLNVKKIGHAGTLDPLATGVVICLINNGTKLSDYFLNENKAYEVTMKLFQATDTYDSDGSIIEEQEPFKIEQEQVEKVIAKFNGLAYEQEPPMYSAIKIDGKKLYEYARENQVVKVNKRLIKINSLSLDKYENNEISMTVYCSKGTYIRSLIVDIAKELNTIAHVTSLNRIESGNFIIKNSVNIENCEESNLIKMFDAIKMADYEIVELDDTLNVEHGKKIEVIAEKNIVFISNKSKELIACYERENGNVFKCKRGGLNI.

Asp40 acts as the Nucleophile in catalysis.

This sequence belongs to the pseudouridine synthase TruB family. Type 1 subfamily.

The catalysed reaction is uridine(55) in tRNA = pseudouridine(55) in tRNA. Responsible for synthesis of pseudouridine from uracil-55 in the psi GC loop of transfer RNAs. The protein is tRNA pseudouridine synthase B of Mesoplasma florum (strain ATCC 33453 / NBRC 100688 / NCTC 11704 / L1) (Acholeplasma florum).